A 142-amino-acid polypeptide reads, in one-letter code: Hemoglobin subunit alpha-2 (142 aa).

Serine 1 bears the N-acetylserine mark. One can recognise a Globin domain in the interval serine 1–arginine 142. Position 59 (histidine 59) interacts with O2. Histidine 88 contacts heme b.

Belongs to the globin family. Hb2 is a heterotetramer of two alpha-2 chains and two beta chains. As to expression, red blood cells.

Its function is as follows. Involved in oxygen transport from gills to the various peripheral tissues. The chain is Hemoglobin subunit alpha-2 (hba2) from Trematomus newnesi (Dusky notothen).